The sequence spans 75 residues: Putative defensin-like protein 271 (75 aa).

The first 23 residues, 1 to 23 (MTSMKLHIVALCIIVSFLVNVQS), serve as a signal peptide directing secretion. Disulfide bonds link C33-C72, C39-C61, C45-C70, and C49-C71.

It belongs to the DEFL family.

It localises to the secreted. This is Putative defensin-like protein 271 from Arabidopsis thaliana (Mouse-ear cress).